Here is a 215-residue protein sequence, read N- to C-terminus: uncharacterized protein (215 aa).

Residues 1 to 29 form the signal peptide; that stretch reads MDKVQSGFLILFLFLMECQLHLCLPYADG. Topologically, residues 30–100 are extracellular; sequence LHPTGNITGL…IIRHRPALVK (71 aa). The helical transmembrane segment at 101 to 121 threads the bilayer; sequence VILISSVAFSIALICGMAISY. Residues 122 to 215 lie on the Cytoplasmic side of the membrane; that stretch reads MIYRLAQAEE…ASHNGKMEDL (94 aa). The segment at 191–215 is disordered; that stretch reads LKEEQNSVTENKTKNASHNGKMEDL. Residues 196 to 208 show a composition bias toward polar residues; that stretch reads NSVTENKTKNASH.

Its subcellular location is the membrane. This is an uncharacterized protein from Homo sapiens (Human).